The chain runs to 250 residues: MPRYKLVIEYDGAPFRGWQRQADDPTVQAAIETAVTRFSGETARLTCAGRTDAGVHAIHQVAHLDLAKDWRTDTVRDALNARLRPQPVAILSAEVVPQEFDARHSAIRRHYRYRILNRRSPAALTRAHVWQVPWPLDAELMHRAAQRLLGHHDFSAFRAAECQAKSPMRTLEQLDVTRVRMGLFEEIVIATSARSFLHHQVRAMAGTLMLAGCKRLSADDVAEILATGAKHRCGPLAPACGLTFVGVDYP.

Catalysis depends on Asp-52, which acts as the Nucleophile. Tyr-111 contacts substrate.

This sequence belongs to the tRNA pseudouridine synthase TruA family. Homodimer.

The enzyme catalyses uridine(38/39/40) in tRNA = pseudouridine(38/39/40) in tRNA. Functionally, formation of pseudouridine at positions 38, 39 and 40 in the anticodon stem and loop of transfer RNAs. The protein is tRNA pseudouridine synthase A of Methylorubrum extorquens (strain PA1) (Methylobacterium extorquens).